Consider the following 285-residue polypeptide: Nucleotide-binding protein Gmet_1286 (285 aa).

Residue 8–15 (GLSGSGKS) coordinates ATP. A GTP-binding site is contributed by 59 to 62 (DIRG).

This sequence belongs to the RapZ-like family.

Displays ATPase and GTPase activities. In Geobacter metallireducens (strain ATCC 53774 / DSM 7210 / GS-15), this protein is Nucleotide-binding protein Gmet_1286.